The following is a 55-amino-acid chain: MAKDKDVRPIIKLKSTAGTGHTYVTRKNRRNDPDRLVLKKYDPRIRQHVEFREER.

The protein belongs to the bacterial ribosomal protein bL33 family.

The protein is Large ribosomal subunit protein bL33 of Renibacterium salmoninarum (strain ATCC 33209 / DSM 20767 / JCM 11484 / NBRC 15589 / NCIMB 2235).